The chain runs to 340 residues: GTP 3',8-cyclase (340 aa).

Residues 8–227 form the Radical SAM core domain; the sequence is KLGRPIRDLR…EMIEQNFDIE (220 aa). GTP is bound at residue Arg17. [4Fe-4S] cluster contacts are provided by Cys24 and Cys28. Tyr30 lines the S-adenosyl-L-methionine pocket. Cys31 is a [4Fe-4S] cluster binding site. Arg71 contacts GTP. Residue Gly75 participates in S-adenosyl-L-methionine binding. Residue Thr102 participates in GTP binding. Ser126 contacts S-adenosyl-L-methionine. Residue Lys163 participates in GTP binding. Met197 lines the S-adenosyl-L-methionine pocket. Residues Cys261 and Cys264 each contribute to the [4Fe-4S] cluster site. 266 to 268 contributes to the GTP binding site; sequence RAR. Residue Cys278 participates in [4Fe-4S] cluster binding.

The protein belongs to the radical SAM superfamily. MoaA family. Monomer and homodimer. [4Fe-4S] cluster serves as cofactor.

The enzyme catalyses GTP + AH2 + S-adenosyl-L-methionine = (8S)-3',8-cyclo-7,8-dihydroguanosine 5'-triphosphate + 5'-deoxyadenosine + L-methionine + A + H(+). The protein operates within cofactor biosynthesis; molybdopterin biosynthesis. Its function is as follows. Catalyzes the cyclization of GTP to (8S)-3',8-cyclo-7,8-dihydroguanosine 5'-triphosphate. The chain is GTP 3',8-cyclase from Staphylococcus saprophyticus subsp. saprophyticus (strain ATCC 15305 / DSM 20229 / NCIMB 8711 / NCTC 7292 / S-41).